The chain runs to 221 residues: Histone H1.3 (221 aa).

Low complexity predominate over residues 1-17; that stretch reads MSETAPVAPAAPAPAEK. The tract at residues 1–42 is disordered; the sequence is MSETAPVAPAAPAPAEKTPVKKKAKKSGVAAGKRKASGPPVS. Residue Ser2 is modified to N-acetylserine. Phosphoserine is present on Ser2. Lys17 is subject to N6-acetyllysine. Position 18 is a phosphothreonine (Thr18). Positions 20 to 36 are enriched in basic residues; it reads VKKKAKKSGVAAGKRKA. N6-(beta-hydroxybutyryl)lysine occurs at positions 35 and 53. The 74-residue stretch at 37-110 folds into the H15 domain; sequence SGPPVSELIT…GASGSFKLNK (74 aa). Residue Arg55 is modified to Citrulline. N6-(beta-hydroxybutyryl)lysine is present on residues Lys65, Lys86, and Lys91. Positions 87 to 221 are disordered; that stretch reads SLVSKGTLVQ…KAKKAVSKKK (135 aa). The residue at position 105 (Ser105) is a Phosphoserine; by PKC. Lys107 bears the N6-(beta-hydroxybutyryl)lysine mark. 4 stretches are compositionally biased toward basic residues: residues 120–141, 150–161, 170–187, and 194–221; these read KGKKAGAAKPKKAAGAAKKPKK, KAAKKTPKKVKK, KVAKSPKKAKAAKPKKPT, and KAPKPKAAKPKAAKPKATKAKKAVSKKK.

This sequence belongs to the histone H1/H5 family. H1 histones are progressively phosphorylated during the cell cycle, becoming maximally phosphorylated during late G2 phase and M phase, and being dephosphorylated sharply thereafter. Post-translationally, citrullination at Arg-55 (H1R54ci) by PADI4 takes place within the DNA-binding site of H1 and results in its displacement from chromatin and global chromatin decondensation, thereby promoting pluripotency and stem cell maintenance.

It is found in the nucleus. The protein resides in the chromosome. In terms of biological role, H1 histones bind to linker DNA between nucleosomes forming the macromolecular structure known as the chromatin fiber. H1 histones are necessary for the condensation of nucleosome chains into higher-order structured fibers. Also acts as a regulator of individual gene transcription through chromatin remodeling, nucleosome spacing and DNA methylation. This Bos taurus (Bovine) protein is Histone H1.3.